The primary structure comprises 264 residues: Small ribosomal subunit protein eS1 (264 aa).

The residue at position 34 (Lys34) is an N6-acetyllysine; alternate. Lys34 participates in a covalent cross-link: Glycyl lysine isopeptide (Lys-Gly) (interchain with G-Cter in SUMO2); alternate. Lys56 carries the post-translational modification N6-acetyllysine. An ADP-ribosyltyrosine modification is found at Tyr155. The disordered stretch occupies residues 232 to 264 (HGEGGSSGKTTGDETGAKVERADGYEPPVQESV). Ser237 bears the Phosphoserine mark. The segment covering 242-255 (TGDETGAKVERADG) has biased composition (basic and acidic residues). Residue Lys249 is modified to N6-acetyllysine; alternate. Lys249 is covalently cross-linked (Glycyl lysine isopeptide (Lys-Gly) (interchain with G-Cter in SUMO2); alternate). The residue at position 256 (Tyr256) is a Phosphotyrosine. Ser263 carries the post-translational modification Phosphoserine.

The protein belongs to the eukaryotic ribosomal protein eS1 family. In terms of assembly, component of the small ribosomal subunit. Mature ribosomes consist of a small (40S) and a large (60S) subunit. The 40S subunit contains about 33 different proteins and 1 molecule of RNA (18S). The 60S subunit contains about 49 different proteins and 3 molecules of RNA (28S, 5.8S and 5S). Identified in a IGF2BP1-dependent mRNP granule complex containing untranslated mRNAs. Binds with high affinity to IPO4. Interacts with DDIT3. Part of the small subunit (SSU) processome, composed of more than 70 proteins and the RNA chaperone small nucleolar RNA (snoRNA) U3. Post-translationally, the protein designated S3b has the same amino acid sequence as S3a except that it lacks the C-terminal 12 residues. It is probable that S3a is converted by proteolysis, either physiologically or fortuitously, to S3b. ADP-ribosylated at Tyr-155 by PARP1 in presence of HPF1.

The protein localises to the cytoplasm. Its subcellular location is the nucleus. It localises to the nucleolus. In terms of biological role, component of the small ribosomal subunit. The ribosome is a large ribonucleoprotein complex responsible for the synthesis of proteins in the cell. Part of the small subunit (SSU) processome, first precursor of the small eukaryotic ribosomal subunit. During the assembly of the SSU processome in the nucleolus, many ribosome biogenesis factors, an RNA chaperone and ribosomal proteins associate with the nascent pre-rRNA and work in concert to generate RNA folding, modifications, rearrangements and cleavage as well as targeted degradation of pre-ribosomal RNA by the RNA exosome. May play a role during erythropoiesis through regulation of transcription factor DDIT3. The protein is Small ribosomal subunit protein eS1 (Rps3a) of Rattus norvegicus (Rat).